A 282-amino-acid polypeptide reads, in one-letter code: Acetyl-coenzyme A carboxylase carboxyl transferase subunit beta (282 aa).

Residues isoleucine 28 to serine 282 form the CoA carboxyltransferase N-terminal domain. Residues cysteine 32, cysteine 35, cysteine 51, and cysteine 54 each contribute to the Zn(2+) site. The C4-type zinc-finger motif lies at cysteine 32–cysteine 54.

It belongs to the AccD/PCCB family. Acetyl-CoA carboxylase is a heterohexamer composed of biotin carboxyl carrier protein (AccB), biotin carboxylase (AccC) and two subunits each of ACCase subunit alpha (AccA) and ACCase subunit beta (AccD). Requires Zn(2+) as cofactor.

The protein resides in the cytoplasm. The catalysed reaction is N(6)-carboxybiotinyl-L-lysyl-[protein] + acetyl-CoA = N(6)-biotinyl-L-lysyl-[protein] + malonyl-CoA. It participates in lipid metabolism; malonyl-CoA biosynthesis; malonyl-CoA from acetyl-CoA: step 1/1. In terms of biological role, component of the acetyl coenzyme A carboxylase (ACC) complex. Biotin carboxylase (BC) catalyzes the carboxylation of biotin on its carrier protein (BCCP) and then the CO(2) group is transferred by the transcarboxylase to acetyl-CoA to form malonyl-CoA. The sequence is that of Acetyl-coenzyme A carboxylase carboxyl transferase subunit beta from Halalkalibacterium halodurans (strain ATCC BAA-125 / DSM 18197 / FERM 7344 / JCM 9153 / C-125) (Bacillus halodurans).